The following is a 163-amino-acid chain: 3-isopropylmalate dehydratase small subunit 2 (163 aa).

It belongs to the LeuD family. LeuD type 2 subfamily. Heterodimer of LeuC and LeuD.

The enzyme catalyses (2R,3S)-3-isopropylmalate = (2S)-2-isopropylmalate. It functions in the pathway amino-acid biosynthesis; L-leucine biosynthesis; L-leucine from 3-methyl-2-oxobutanoate: step 2/4. Its function is as follows. Catalyzes the isomerization between 2-isopropylmalate and 3-isopropylmalate, via the formation of 2-isopropylmaleate. In Pyrococcus abyssi (strain GE5 / Orsay), this protein is 3-isopropylmalate dehydratase small subunit 2 (leuD2).